The primary structure comprises 411 residues: Peptidase T (411 aa).

His-79 provides a ligand contact to Zn(2+). Residue Asp-81 is part of the active site. Asp-142 is a binding site for Zn(2+). The Proton acceptor role is filled by Glu-176. 3 residues coordinate Zn(2+): Glu-177, Asp-199, and His-381.

The protein belongs to the peptidase M20B family. The cofactor is Zn(2+).

It is found in the cytoplasm. It catalyses the reaction Release of the N-terminal residue from a tripeptide.. Cleaves the N-terminal amino acid of tripeptides. The chain is Peptidase T from Geobacillus kaustophilus (strain HTA426).